A 284-amino-acid polypeptide reads, in one-letter code: Spermidine/putrescine transport system permease protein PotC homolog (284 aa).

6 helical membrane-spanning segments follow: residues 13–33, 76–96, 116–136, 143–163, 189–209, and 242–262; these read YFFL…LVSL, IIIG…SAFA, LATP…NTWL, GFFT…LILI, FFHI…LVVF, and AWAI…VCLI. The ABC transmembrane type-1 domain occupies 72 to 263; the sequence is LINSIIIGVI…ISVLGVCLIT (192 aa).

It belongs to the binding-protein-dependent transport system permease family. CysTW subfamily.

It is found in the cell membrane. In terms of biological role, required for the activity of the bacterial transport system of putrescine and spermidine. The sequence is that of Spermidine/putrescine transport system permease protein PotC homolog (potC) from Mycoplasma genitalium (strain ATCC 33530 / DSM 19775 / NCTC 10195 / G37) (Mycoplasmoides genitalium).